Reading from the N-terminus, the 464-residue chain is MTWNMLLALLPLLVLFGGSITVLFLSERRALLSAAMCAVVAAGFAWWPASLEAAGTPLVASNLFARGCLTLWALLGAATCLLSDRYRGSRKLAAREYAALTLFAVLGMAILSASTSLVSLFLGLESMTLAFYVLIAVDRENPTGAEAGLKYLLPGFLASALLAFGIALVYAATGTFELSAAISLSMAGAPMPSIALLGWTLIMAAAAFKASLAPFHLWTPDVYQGASAPIAGFLASGSKGAVFAVLLGSAPLALIVPLRPLLGGLAALSMIWGTLAALRQTNLKRMLAYSSVVHMGYLVLAVLSNRSAGMEAGLFYLLTYSAATVGTFGLLASMVDSGGEPQDYAALEGLAGRSPWRAVLLTGLLLSLAGFPPLAGFMGKFVLFGAALQSGYVGLVVLALLSSLISCYYYLRPVLYLFRVRQGAPTVPAFNNCERLIFVLCAGVTLVAGLYPGPFFRWFGAMLP.

13 helical membrane passes run 5 to 25, 31 to 51, 63 to 83, 96 to 116, 117 to 137, 152 to 172, 188 to 208, 242 to 262, 286 to 303, 312 to 332, 358 to 378, 393 to 415, and 436 to 456; these read MLLA…VLFL, LLSA…PASL, LFAR…CLLS, EYAA…ASTS, LVSL…LIAV, LLPG…VYAA, GAPM…AAAF, VFAV…RPLL, MLAY…LAVL, AGLF…GLLA, AVLL…AGFM, VGLV…RPVL, and LIFV…GPFF.

It belongs to the complex I subunit 2 family. NDH-1 is composed of 14 different subunits. Subunits NuoA, H, J, K, L, M, N constitute the membrane sector of the complex.

It is found in the cell inner membrane. It carries out the reaction a quinone + NADH + 5 H(+)(in) = a quinol + NAD(+) + 4 H(+)(out). In terms of biological role, NDH-1 shuttles electrons from NADH, via FMN and iron-sulfur (Fe-S) centers, to quinones in the respiratory chain. The immediate electron acceptor for the enzyme in this species is believed to be ubiquinone. Couples the redox reaction to proton translocation (for every two electrons transferred, four hydrogen ions are translocated across the cytoplasmic membrane), and thus conserves the redox energy in a proton gradient. The sequence is that of NADH-quinone oxidoreductase subunit N from Syntrophotalea carbinolica (strain DSM 2380 / NBRC 103641 / GraBd1) (Pelobacter carbinolicus).